Reading from the N-terminus, the 173-residue chain is Photosystem I assembly protein Ycf3 (173 aa).

TPR repeat units lie at residues 35-68 (AYIYYRDGLAAQNNGDYSEALEYYKESLLLEENK), 72-105 (GETLKNMAIIYMSNGEEDLSIETYEKALVENPKQ), and 120-153 (GRNAEQNGDLDQRDIWFDKAAEVWSKAVRLYPGG).

The protein belongs to the Ycf3 family.

It localises to the cellular thylakoid membrane. Essential for the assembly of the photosystem I (PSI) complex. May act as a chaperone-like factor to guide the assembly of the PSI subunits. The chain is Photosystem I assembly protein Ycf3 from Prochlorococcus marinus (strain MIT 9301).